A 366-amino-acid chain; its full sequence is Aminomethyltransferase (366 aa).

Belongs to the GcvT family. As to quaternary structure, the glycine cleavage system is composed of four proteins: P, T, L and H.

It carries out the reaction N(6)-[(R)-S(8)-aminomethyldihydrolipoyl]-L-lysyl-[protein] + (6S)-5,6,7,8-tetrahydrofolate = N(6)-[(R)-dihydrolipoyl]-L-lysyl-[protein] + (6R)-5,10-methylene-5,6,7,8-tetrahydrofolate + NH4(+). Functionally, the glycine cleavage system catalyzes the degradation of glycine. This is Aminomethyltransferase from Bacillus velezensis (strain DSM 23117 / BGSC 10A6 / LMG 26770 / FZB42) (Bacillus amyloliquefaciens subsp. plantarum).